The sequence spans 453 residues: Methylenetetrahydrofolate--tRNA-(uracil-5-)-methyltransferase TrmFO (453 aa).

10–15 (GGGLAG) lines the FAD pocket. The segment at 433–453 (ELAPWIDSAPPTAVPAAPAAG) is disordered. Residues 441–453 (APPTAVPAAPAAG) show a composition bias toward low complexity.

Belongs to the MnmG family. TrmFO subfamily. Requires FAD as cofactor.

It localises to the cytoplasm. It carries out the reaction uridine(54) in tRNA + (6R)-5,10-methylene-5,6,7,8-tetrahydrofolate + NADH + H(+) = 5-methyluridine(54) in tRNA + (6S)-5,6,7,8-tetrahydrofolate + NAD(+). The enzyme catalyses uridine(54) in tRNA + (6R)-5,10-methylene-5,6,7,8-tetrahydrofolate + NADPH + H(+) = 5-methyluridine(54) in tRNA + (6S)-5,6,7,8-tetrahydrofolate + NADP(+). Catalyzes the folate-dependent formation of 5-methyl-uridine at position 54 (M-5-U54) in all tRNAs. The sequence is that of Methylenetetrahydrofolate--tRNA-(uracil-5-)-methyltransferase TrmFO from Anaeromyxobacter dehalogenans (strain 2CP-1 / ATCC BAA-258).